We begin with the raw amino-acid sequence, 171 residues long: MKADLHIHTKYSGIGKFWKLKFPDSVEEPRNILKVAKKKGIEVVAITDHNTIRGGVETKKLEKEFGVEVVIGSEIMTTEGEIIGLFLNEDIPKGLSPEETIEKIKEQGGLAIAPHPYSPICKALGDRIFDLDLDGVEVFNAYHRDGIVNNIALNKVIKELPQKAFCIYWRE.

To M.jannaschii MJ0417.

This is an uncharacterized protein from Methanocaldococcus jannaschii (strain ATCC 43067 / DSM 2661 / JAL-1 / JCM 10045 / NBRC 100440) (Methanococcus jannaschii).